The primary structure comprises 379 residues: Homoserine O-succinyltransferase (379 aa).

The region spanning N51–L360 is the AB hydrolase-1 domain. The Nucleophile role is filled by S157. R227 is a substrate binding site. Active-site residues include D323 and H356. D357 contacts substrate.

This sequence belongs to the AB hydrolase superfamily. MetX family. As to quaternary structure, homodimer.

It localises to the cytoplasm. The catalysed reaction is L-homoserine + succinyl-CoA = O-succinyl-L-homoserine + CoA. It participates in amino-acid biosynthesis; L-methionine biosynthesis via de novo pathway; O-succinyl-L-homoserine from L-homoserine: step 1/1. Transfers a succinyl group from succinyl-CoA to L-homoserine, forming succinyl-L-homoserine. This chain is Homoserine O-succinyltransferase, found in Pseudomonas paraeruginosa (strain DSM 24068 / PA7) (Pseudomonas aeruginosa (strain PA7)).